The sequence spans 345 residues: Biotin synthase (345 aa).

The 219-residue stretch at 38–256 (GEVQVSTLLS…IAVARIMMPR (219 aa)) folds into the Radical SAM core domain. Positions 53, 57, and 60 each coordinate [4Fe-4S] cluster. Cysteine 97, cysteine 128, cysteine 188, and arginine 260 together coordinate [2Fe-2S] cluster.

Belongs to the radical SAM superfamily. Biotin synthase family. In terms of assembly, homodimer. The cofactor is [4Fe-4S] cluster. It depends on [2Fe-2S] cluster as a cofactor.

It carries out the reaction (4R,5S)-dethiobiotin + (sulfur carrier)-SH + 2 reduced [2Fe-2S]-[ferredoxin] + 2 S-adenosyl-L-methionine = (sulfur carrier)-H + biotin + 2 5'-deoxyadenosine + 2 L-methionine + 2 oxidized [2Fe-2S]-[ferredoxin]. It participates in cofactor biosynthesis; biotin biosynthesis; biotin from 7,8-diaminononanoate: step 2/2. Functionally, catalyzes the conversion of dethiobiotin (DTB) to biotin by the insertion of a sulfur atom into dethiobiotin via a radical-based mechanism. The chain is Biotin synthase from Sodalis glossinidius (strain morsitans).